The primary structure comprises 363 residues: NAD(P)H-quinone oxidoreductase subunit 1, chloroplastic (363 aa).

6 helical membrane-spanning segments follow: residues 30 to 50 (LVPI…IVWL), 98 to 118 (FSIG…VIPF), 129 to 149 (IGIF…LMSG), 248 to 268 (YSGI…LLSS), 300 to 320 (IIGT…FLFI), and 343 to 363 (FLLP…LLSL).

This sequence belongs to the complex I subunit 1 family. In terms of assembly, NDH is composed of at least 16 different subunits, 5 of which are encoded in the nucleus.

The protein localises to the plastid. It is found in the chloroplast thylakoid membrane. The catalysed reaction is a plastoquinone + NADH + (n+1) H(+)(in) = a plastoquinol + NAD(+) + n H(+)(out). It catalyses the reaction a plastoquinone + NADPH + (n+1) H(+)(in) = a plastoquinol + NADP(+) + n H(+)(out). Functionally, NDH shuttles electrons from NAD(P)H:plastoquinone, via FMN and iron-sulfur (Fe-S) centers, to quinones in the photosynthetic chain and possibly in a chloroplast respiratory chain. The immediate electron acceptor for the enzyme in this species is believed to be plastoquinone. Couples the redox reaction to proton translocation, and thus conserves the redox energy in a proton gradient. The polypeptide is NAD(P)H-quinone oxidoreductase subunit 1, chloroplastic (Gossypium hirsutum (Upland cotton)).